The primary structure comprises 347 residues: MAIVSSSSGRKSPCRETALVDPQPAPEEQVIRPEDSLRPKRLSEYIGQSELKQVLGIAVEAALGRGEALDHVLLYGPPGLGKTTMALVLAEELGVNCRITSAPALERPRDIVGLLVNLQPRDLLFIDEIHRLSRVAEELLYPAMEDRRLDLTVGKGSTARTRTLDLPPFTLVGATTRAGSLSSPLRDRFGLIQRLEFYGQTDLEAIVARTAELVSVDLTFDACARIAASCRGTPRIANRLLRRVRDVASVRQGKGTIDDAMVAEALSLHRVDHRGLDASDRRLLAMLMDQHGGGPVGLETLAAALGEDPVTLETVVEPFLLQQGLLVRTPRGRMVTDAARSHIAEAA.

Over residues Met-1 to Arg-10 the composition is skewed to polar residues. The segment at Met-1–Gln-29 is disordered. Residues Pro-13 to Tyr-198 form a large ATPase domain (RuvB-L) region. 9 residues coordinate ATP: Leu-37, Arg-38, Gly-79, Lys-82, Thr-83, Thr-84, Arg-188, Tyr-198, and Arg-235. Thr-83 provides a ligand contact to Mg(2+). Residues Gly-199–Arg-270 form a small ATPAse domain (RuvB-S) region. The tract at residues His-273–Ala-347 is head domain (RuvB-H). DNA contacts are provided by Arg-328 and Arg-333.

It belongs to the RuvB family. In terms of assembly, homohexamer. Forms an RuvA(8)-RuvB(12)-Holliday junction (HJ) complex. HJ DNA is sandwiched between 2 RuvA tetramers; dsDNA enters through RuvA and exits via RuvB. An RuvB hexamer assembles on each DNA strand where it exits the tetramer. Each RuvB hexamer is contacted by two RuvA subunits (via domain III) on 2 adjacent RuvB subunits; this complex drives branch migration. In the full resolvosome a probable DNA-RuvA(4)-RuvB(12)-RuvC(2) complex forms which resolves the HJ.

It localises to the cytoplasm. The enzyme catalyses ATP + H2O = ADP + phosphate + H(+). The RuvA-RuvB-RuvC complex processes Holliday junction (HJ) DNA during genetic recombination and DNA repair, while the RuvA-RuvB complex plays an important role in the rescue of blocked DNA replication forks via replication fork reversal (RFR). RuvA specifically binds to HJ cruciform DNA, conferring on it an open structure. The RuvB hexamer acts as an ATP-dependent pump, pulling dsDNA into and through the RuvAB complex. RuvB forms 2 homohexamers on either side of HJ DNA bound by 1 or 2 RuvA tetramers; 4 subunits per hexamer contact DNA at a time. Coordinated motions by a converter formed by DNA-disengaged RuvB subunits stimulates ATP hydrolysis and nucleotide exchange. Immobilization of the converter enables RuvB to convert the ATP-contained energy into a lever motion, pulling 2 nucleotides of DNA out of the RuvA tetramer per ATP hydrolyzed, thus driving DNA branch migration. The RuvB motors rotate together with the DNA substrate, which together with the progressing nucleotide cycle form the mechanistic basis for DNA recombination by continuous HJ branch migration. Branch migration allows RuvC to scan DNA until it finds its consensus sequence, where it cleaves and resolves cruciform DNA. This Synechococcus sp. (strain CC9902) protein is Holliday junction branch migration complex subunit RuvB.